Reading from the N-terminus, the 304-residue chain is Glycine--tRNA ligase alpha subunit (304 aa).

This sequence belongs to the class-II aminoacyl-tRNA synthetase family. As to quaternary structure, tetramer of two alpha and two beta subunits.

The protein localises to the cytoplasm. It carries out the reaction tRNA(Gly) + glycine + ATP = glycyl-tRNA(Gly) + AMP + diphosphate. This Pectobacterium carotovorum subsp. carotovorum (strain PC1) protein is Glycine--tRNA ligase alpha subunit.